We begin with the raw amino-acid sequence, 147 residues long: 3-dehydroquinate dehydratase (147 aa).

Tyr23 functions as the Proton acceptor in the catalytic mechanism. Positions 75, 81, and 88 each coordinate substrate. The Proton donor role is filled by His101. Substrate is bound by residues 102–103 (LS) and Arg112.

It belongs to the type-II 3-dehydroquinase family. In terms of assembly, homododecamer.

The catalysed reaction is 3-dehydroquinate = 3-dehydroshikimate + H2O. It participates in metabolic intermediate biosynthesis; chorismate biosynthesis; chorismate from D-erythrose 4-phosphate and phosphoenolpyruvate: step 3/7. Catalyzes a trans-dehydration via an enolate intermediate. The polypeptide is 3-dehydroquinate dehydratase (Nitrosococcus oceani (strain ATCC 19707 / BCRC 17464 / JCM 30415 / NCIMB 11848 / C-107)).